A 372-amino-acid chain; its full sequence is Probable butyrate kinase (372 aa).

This sequence belongs to the acetokinase family.

Its subcellular location is the cytoplasm. It carries out the reaction butanoate + ATP = butanoyl phosphate + ADP. The protein is Probable butyrate kinase of Oleidesulfovibrio alaskensis (strain ATCC BAA-1058 / DSM 17464 / G20) (Desulfovibrio alaskensis).